The sequence spans 568 residues: 2-succinyl-5-enolpyruvyl-6-hydroxy-3-cyclohexene-1-carboxylate synthase (568 aa).

This sequence belongs to the TPP enzyme family. MenD subfamily. Homodimer. Requires Mg(2+) as cofactor. It depends on Mn(2+) as a cofactor. The cofactor is thiamine diphosphate.

The catalysed reaction is isochorismate + 2-oxoglutarate + H(+) = 5-enolpyruvoyl-6-hydroxy-2-succinyl-cyclohex-3-ene-1-carboxylate + CO2. It participates in quinol/quinone metabolism; 1,4-dihydroxy-2-naphthoate biosynthesis; 1,4-dihydroxy-2-naphthoate from chorismate: step 2/7. The protein operates within quinol/quinone metabolism; menaquinone biosynthesis. Catalyzes the thiamine diphosphate-dependent decarboxylation of 2-oxoglutarate and the subsequent addition of the resulting succinic semialdehyde-thiamine pyrophosphate anion to isochorismate to yield 2-succinyl-5-enolpyruvyl-6-hydroxy-3-cyclohexene-1-carboxylate (SEPHCHC). The sequence is that of 2-succinyl-5-enolpyruvyl-6-hydroxy-3-cyclohexene-1-carboxylate synthase from Haemophilus influenzae (strain PittEE).